A 380-amino-acid polypeptide reads, in one-letter code: Probable tRNA sulfurtransferase (380 aa).

In terms of domain architecture, THUMP spans 58 to 162; it reads EEVIERLKKV…MAFVYAGVIE (105 aa). ATP contacts are provided by residues 178 to 179, 203 to 204, arginine 260, glycine 282, and glutamine 291; these read LL and YF.

The protein belongs to the ThiI family.

Its subcellular location is the cytoplasm. The catalysed reaction is [ThiI sulfur-carrier protein]-S-sulfanyl-L-cysteine + a uridine in tRNA + 2 reduced [2Fe-2S]-[ferredoxin] + ATP + H(+) = [ThiI sulfur-carrier protein]-L-cysteine + a 4-thiouridine in tRNA + 2 oxidized [2Fe-2S]-[ferredoxin] + AMP + diphosphate. It carries out the reaction [ThiS sulfur-carrier protein]-C-terminal Gly-Gly-AMP + S-sulfanyl-L-cysteinyl-[cysteine desulfurase] + AH2 = [ThiS sulfur-carrier protein]-C-terminal-Gly-aminoethanethioate + L-cysteinyl-[cysteine desulfurase] + A + AMP + 2 H(+). The protein operates within cofactor biosynthesis; thiamine diphosphate biosynthesis. In terms of biological role, catalyzes the ATP-dependent transfer of a sulfur to tRNA to produce 4-thiouridine in position 8 of tRNAs, which functions as a near-UV photosensor. Also catalyzes the transfer of sulfur to the sulfur carrier protein ThiS, forming ThiS-thiocarboxylate. This is a step in the synthesis of thiazole, in the thiamine biosynthesis pathway. The sulfur is donated as persulfide by IscS. The polypeptide is Probable tRNA sulfurtransferase (Thermoanaerobacter sp. (strain X514)).